We begin with the raw amino-acid sequence, 122 residues long: Sperm-egg fusion protein LLCFC1 (122 aa).

The first 28 residues, 1-28, serve as a signal peptide directing secretion; sequence MPPLAPQLCRAVFLVPILLLLQVKPLNG. Residues 27-51 are disordered; sequence NGSPGPKDGSQTEKTPSADQNQEQF. Polar residues predominate over residues 38 to 49; it reads TEKTPSADQNQE.

The protein resides in the secreted. Its function is as follows. Sperm protein required for fusion of sperm with the egg membrane during fertilization. The protein is Sperm-egg fusion protein LLCFC1 of Homo sapiens (Human).